Consider the following 211-residue polypeptide: Orotate phosphoribosyltransferase (211 aa).

Lysine 26 provides a ligand contact to 5-phospho-alpha-D-ribose 1-diphosphate. An orotate-binding site is contributed by 34–35 (FF). Residues 72–73 (YK), arginine 98, lysine 99, lysine 102, histidine 104, and 123–131 (DDVITAGTA) each bind 5-phospho-alpha-D-ribose 1-diphosphate. Orotate contacts are provided by threonine 127 and arginine 155.

The protein belongs to the purine/pyrimidine phosphoribosyltransferase family. PyrE subfamily. In terms of assembly, homodimer. The cofactor is Mg(2+).

It carries out the reaction orotidine 5'-phosphate + diphosphate = orotate + 5-phospho-alpha-D-ribose 1-diphosphate. It functions in the pathway pyrimidine metabolism; UMP biosynthesis via de novo pathway; UMP from orotate: step 1/2. Its function is as follows. Catalyzes the transfer of a ribosyl phosphate group from 5-phosphoribose 1-diphosphate to orotate, leading to the formation of orotidine monophosphate (OMP). This is Orotate phosphoribosyltransferase from Legionella pneumophila (strain Lens).